The primary structure comprises 192 residues: Putative acetyltransferase YjbC (192 aa).

The N-acetyltransferase domain maps to 1–139 (MNWYEKLSEY…MEILYWSPKT (139 aa)).

It localises to the cytoplasm. The chain is Putative acetyltransferase YjbC (yjbC) from Bacillus subtilis (strain 168).